Reading from the N-terminus, the 207-residue chain is Histone H1 (207 aa).

Low complexity predominate over residues 1-15; that stretch reads MAEVAPAPAAAAPAK. 2 disordered regions span residues 1-28 and 105-207; these read MAEVAPAPAAAAPAKAPKKKAAAKPKKA and EAKK…PKKK. Residue Ala-2 is modified to N-acetylalanine. Over residues 16 to 27 the composition is skewed to basic residues; the sequence is APKKKAAAKPKK. The H15 domain maps to 28–101; it reads AGPSVGELIV…GASGSFKLNK (74 aa). Composition is skewed to basic residues over residues 117–168 and 175–207; these read KAKK…KVKK and KAAKSPKKATKAAKPKAAKPKAAKAKKAAPKKK.

Belongs to the histone H1/H5 family. As to expression, oncorhyncin II is expressed in skin.

Its subcellular location is the nucleus. The protein resides in the chromosome. It localises to the secreted. Its function is as follows. Histones H1 are necessary for the condensation of nucleosome chains into higher-order structures. Functionally, oncorhyncin II has antibacterial activity against Gram-positive and Gram-negative bacteria at submicromolar concentrations. Potentially important role in mucosal defense. This chain is Histone H1, found in Oncorhynchus mykiss (Rainbow trout).